The following is an 81-amino-acid chain: uncharacterized protein (81 aa).

The region spanning 1–45 (MRTTIDVAGRLVIPKRIRERLGLRGNDQVEITERDGRIEIEPAPT) is the SpoVT-AbrB domain.

This sequence to B.subtilis SpoVT.

This is an uncharacterized protein from Mycobacterium bovis (strain ATCC BAA-935 / AF2122/97).